We begin with the raw amino-acid sequence, 67 residues long: MPKMKTKSSAKKRFKVTASGKIKVAAAGKRHGMIKRSNKFIRDARGTMVLCEQDAKKVIQHYLPNGL.

This sequence belongs to the bacterial ribosomal protein bL35 family.

This is Large ribosomal subunit protein bL35 from Bartonella tribocorum (strain CIP 105476 / IBS 506).